A 906-amino-acid polypeptide reads, in one-letter code: Protein translocase subunit SecA (906 aa).

Residues Q89, 107 to 111 (GEGKT), and D502 contribute to the ATP site. Residues C890, C892, C901, and H902 each contribute to the Zn(2+) site.

This sequence belongs to the SecA family. As to quaternary structure, monomer and homodimer. Part of the essential Sec protein translocation apparatus which comprises SecA, SecYEG and auxiliary proteins SecDF-YajC and YidC. Zn(2+) serves as cofactor.

The protein localises to the cell inner membrane. The protein resides in the cytoplasm. It catalyses the reaction ATP + H2O + cellular proteinSide 1 = ADP + phosphate + cellular proteinSide 2.. Part of the Sec protein translocase complex. Interacts with the SecYEG preprotein conducting channel. Has a central role in coupling the hydrolysis of ATP to the transfer of proteins into and across the cell membrane, serving both as a receptor for the preprotein-SecB complex and as an ATP-driven molecular motor driving the stepwise translocation of polypeptide chains across the membrane. This chain is Protein translocase subunit SecA, found in Brucella suis biovar 1 (strain 1330).